The primary structure comprises 922 residues: Coronin-7 (922 aa).

4 WD repeats span residues 75-115 (CHSD…EALP), 124-163 (PEEL…HLTE), 166-205 (AHKD…QASQ), and 209-253 (AHEN…SALA). The disordered stretch occupies residues 386 to 462 (NPAHRPHPRF…TSPSQRSLQS (77 aa)). The segment covering 423-456 (SEGFSSPSSLVSPSTPSSLGLSLSSTSGIGTSPS) has biased composition (low complexity). Phosphoserine occurs at positions 459 and 462. A Glycyl lysine isopeptide (Lys-Gly) (interchain with G-Cter in ubiquitin) cross-link involves residue Lys-469. WD repeat units lie at residues 539-579 (QNGA…LKNV), 589-629 (GHTE…EQLR), 632-671 (GHQD…LPLQ), and 725-765 (DVAP…PFFL). Residues 854–922 (LQPPGMTPVS…FEGVDEDEWD (69 aa)) are disordered. The residue at position 874 (Thr-874) is a Phosphothreonine. Residues 881 to 893 (LEEKSDQQKKEEL) show a composition bias toward basic and acidic residues. Ser-912 is subject to Phosphoserine.

It belongs to the WD repeat coronin family. Interacts with clathrin adapter AP1 complex. This interaction takes place at Golgi membranes and not AP1-positive endosomal membranes. Interacts (when ubiquitinated at Lys-469) with EPS15. In terms of processing, the membrane-associated form is phosphorylated on tyrosine residues. Post-translationally, ubiquitinated via 'Lys-33'-linked ubiquitin chains by the BCR(KLHL20) E3 ubiquitin ligase complex: 'Lys-33'-linked ubiquitination promotes interaction with EPS15 and facilitates actin polymerization at the trans-Golgi network, thereby facilitating post-Golgi trafficking. Deubiquitinated by ZRANB1/TRABID.

It is found in the golgi apparatus membrane. Its subcellular location is the golgi apparatus. The protein resides in the trans-Golgi network. It localises to the cytoplasmic vesicle. The protein localises to the cytoplasm. It is found in the cytosol. F-actin regulator involved in anterograde Golgi to endosome transport: upon ubiquitination via 'Lys-33'-linked ubiquitin chains by the BCR(KLHL20) E3 ubiquitin ligase complex, interacts with EPS15 and localizes to the trans-Golgi network, where it promotes actin polymerization, thereby facilitating post-Golgi trafficking. May play a role in the maintenance of the Golgi apparatus morphology. This is Coronin-7 (Coro7) from Rattus norvegicus (Rat).